Reading from the N-terminus, the 212-residue chain is Glycerol-3-phosphate acyltransferase (212 aa).

A run of 4 helical transmembrane segments spans residues 3–23 (ILLA…VVVS), 78–98 (DVAV…PVFF), 115–135 (AVHP…AFFF), and 155–177 (FLFG…LLVW).

The protein belongs to the PlsY family. In terms of assembly, probably interacts with PlsX.

The protein resides in the cell inner membrane. It carries out the reaction an acyl phosphate + sn-glycerol 3-phosphate = a 1-acyl-sn-glycero-3-phosphate + phosphate. It functions in the pathway lipid metabolism; phospholipid metabolism. Catalyzes the transfer of an acyl group from acyl-phosphate (acyl-PO(4)) to glycerol-3-phosphate (G3P) to form lysophosphatidic acid (LPA). This enzyme utilizes acyl-phosphate as fatty acyl donor, but not acyl-CoA or acyl-ACP. The protein is Glycerol-3-phosphate acyltransferase of Burkholderia ambifaria (strain ATCC BAA-244 / DSM 16087 / CCUG 44356 / LMG 19182 / AMMD) (Burkholderia cepacia (strain AMMD)).